The sequence spans 276 residues: N-acetylmuramoyl-L-alanine amidase AmiD (276 aa).

Positions 1 to 16 are cleaved as a signal peptide; the sequence is MRRFFWLVAAALLLAG. Cys-17 carries the N-palmitoyl cysteine lipid modification. Cys-17 carries the S-diacylglycerol cysteine lipid modification. One can recognise an N-acetylmuramoyl-L-alanine amidase domain in the interval 42 to 179; sequence PRIKVLVIHY…APQRKDDPGP (138 aa). Position 50 (His-50) interacts with Zn(2+). 51–52 contacts substrate; sequence YT. The active-site Proton acceptor is the Glu-119. Residues His-166 and Asp-176 each contribute to the Zn(2+) site.

Belongs to the N-acetylmuramoyl-L-alanine amidase 2 family. Zn(2+) serves as cofactor.

The protein localises to the cell outer membrane. It catalyses the reaction Hydrolyzes the link between N-acetylmuramoyl residues and L-amino acid residues in certain cell-wall glycopeptides.. The protein is N-acetylmuramoyl-L-alanine amidase AmiD (amiD) of Escherichia coli (strain K12).